Here is a 498-residue protein sequence, read N- to C-terminus: MASQGTKRSYEQMETDGERQNATEIRASVGRMIGGIGRFYIQMCTELKLNDYEGRLIQNSLTIERMVLSAFDERRNKYLEEHPSAGKDPKKTGGPIYKRVDGKWVRELVLYDKEEIRRIWRQANNGDDATAGLTHIMIWHSNLNDTTYQRTRALVRTGMDPRMCSLMQGSTLPRRSGAAGAAVKGVGTMVLELIRMIKRGINDRNFWRGENGRKTRIAYERMCNILKGKFQTAAQKAMMDQVRESRNPGNAEIEDLTFLARSALILRGSVAHKSCLPACVYGPAVASGYDFEKEGYSLVGVDPFKLLQTSQVYSLIRPNENPAHKSQLVWMACNSAAFEDLRVSSFIRGTRVLPRGKLSTRGVQIASNENMDAIVSSTLELRSRYWAIRTRSGGNTNQQRASAGQISTQPTFSVQRNLPFDKATIMAAFTGNTEGRTSDMRAEIIKMMESARPEEVSFQGRGVFELSDERATNPIVPSFDMSNEGSYFFGDNAEEYDN.

The short motif at 1 to 18 is the Unconventional nuclear localization signal element; it reads MASQGTKRSYEQMETDGE. Residues 1 to 21 form a disordered region; the sequence is MASQGTKRSYEQMETDGERQN. Residues 8 to 21 show a composition bias toward basic and acidic residues; it reads RSYEQMETDGERQN. A Bipartite nuclear localization signal motif is present at residues 198 to 216; it reads KRGINDRNFWRGENGRKTR.

Belongs to the influenza viruses nucleoprotein family. Homomultimerizes to form the nucleocapsid. May bind host exportin-1/XPO1. Binds to viral genomic RNA. Protein-RNA contacts are mediated by a combination of electrostatic interactions between positively charged residues and the phosphate backbone and planar interactions between aromatic side chains and bases. Post-translationally, late in virus-infected cells, may be cleaved from a 56-kDa protein to a 53-kDa protein by a cellular caspase. This cleavage might be a marker for the onset of apoptosis in infected cells or have a specific function in virus host interaction.

It localises to the virion. The protein localises to the host nucleus. Functionally, encapsidates the negative strand viral RNA, protecting it from nucleases. The encapsidated genomic RNA is termed the ribonucleoprotein (RNP) and serves as template for transcription and replication. The RNP needs to be localized in the host nucleus to start an infectious cycle, but is too large to diffuse through the nuclear pore complex. NP comprises at least 2 nuclear localization signals that are responsible for the active RNP import into the nucleus through cellular importin alpha/beta pathway. Later in the infection, nclear export of RNPs are mediated through viral proteins NEP interacting with M1 which binds nucleoproteins. It is possible that nucleoprotein binds directly host exportin-1/XPO1 and plays an active role in RNPs nuclear export. M1 interaction with RNP seems to hide nucleoprotein's nuclear localization signals. Soon after a virion infects a new cell, M1 dissociates from the RNP under acidification of the virion driven by M2 protein. Dissociation of M1 from RNP unmasks nucleoprotein's nuclear localization signals, targeting the RNP to the nucleus. The polypeptide is Nucleoprotein (Influenza A virus (strain A/USA:Texas/UR06-0195/2007 H1N1)).